Here is a 77-residue protein sequence, read N- to C-terminus: Large ribosomal subunit protein bL28 (77 aa).

It belongs to the bacterial ribosomal protein bL28 family.

This is Large ribosomal subunit protein bL28 from Paracidovorax citrulli (strain AAC00-1) (Acidovorax citrulli).